The following is a 520-amino-acid chain: Transactivator/viroplasmin protein (520 aa).

Positions 486 to 520 (VQDASADSGPKDGPPPTRSIVEKEDVPTTSSKQVD) are disordered.

Belongs to the caulimoviridae viroplasmin family.

Its subcellular location is the host cytoplasm. Functionally, enhances the ribosomal termination-reinitiation event leading to the translation of major open reading frames on the polycistronic viral RNAs. This chain is Transactivator/viroplasmin protein, found in Cauliflower mosaic virus (strain BBC) (CaMV).